The primary structure comprises 962 residues: Exportin-T (962 aa).

The residue at position 1 (M1) is an N-acetylmethionine. Residues M1–Y385 form a necessary for interaction with Ran, nuclear localization and nuclear import region. The tract at residues F443–P962 is necessary for tRNA-binding, cytoplasmic localization and nuclear export. Residue K634 is modified to N6-acetyllysine.

The protein belongs to the exportin family. In terms of assembly, found in a complex with XPOT, Ran and tRNA. Probably found in a complex with nucleoporins. Interacts with Ran and tRNA in a GTP-dependent manner.

It is found in the nucleus. The protein localises to the cytoplasm. In terms of biological role, mediates the nuclear export of aminoacylated tRNAs. In the nucleus binds to tRNA and to the GTPase Ran in its active GTP-bound form. Docking of this trimeric complex to the nuclear pore complex (NPC) is mediated through binding to nucleoporins. Upon transit of a nuclear export complex into the cytoplasm, disassembling of the complex and hydrolysis of Ran-GTP to Ran-GDP (induced by RANBP1 and RANGAP1, respectively) cause release of the tRNA from the export receptor. XPOT then return to the nuclear compartment and mediate another round of transport. The directionality of nuclear export is thought to be conferred by an asymmetric distribution of the GTP- and GDP-bound forms of Ran between the cytoplasm and nucleus. The polypeptide is Exportin-T (XPOT) (Homo sapiens (Human)).